A 351-amino-acid chain; its full sequence is Photosystem II D2 protein (351 aa).

The helical transmembrane segment at 39–59 (CSYLALGAWFTGTTFVTSWYT) threads the bilayer. Chlorophyll a is bound at residue histidine 116. Residues 123–139 (GFCLRQFEIARLVGIRP) traverse the membrane as a helical segment. The pheophytin a site is built by glutamine 128 and asparagine 141. Residues 151–164 (VFVSVFLIYPLGQA) form a helical membrane-spanning segment. Histidine 196 serves as a coordination point for chlorophyll a. A helical transmembrane segment spans residues 206 to 226 (GALLCAIHGATVENTLFEDGE). Residues histidine 213 and phenylalanine 260 each contribute to the a plastoquinone site. Histidine 213 contributes to the Fe cation binding site. Histidine 267 is a Fe cation binding site. The helical transmembrane segment at 277–293 (GLWTSSIGIIGLALNLR) threads the bilayer.

It belongs to the reaction center PufL/M/PsbA/D family. As to quaternary structure, PSII is composed of 1 copy each of membrane proteins PsbA, PsbB, PsbC, PsbD, PsbE, PsbF, PsbH, PsbI, PsbJ, PsbK, PsbL, PsbM, PsbT, PsbY, PsbZ, Psb30/Ycf12, at least 3 peripheral proteins of the oxygen-evolving complex and a large number of cofactors. It forms dimeric complexes. The D1/D2 heterodimer binds P680, chlorophylls that are the primary electron donor of PSII, and subsequent electron acceptors. It shares a non-heme iron and each subunit binds pheophytin, quinone, additional chlorophylls, carotenoids and lipids. There is also a Cl(-1) ion associated with D1 and D2, which is required for oxygen evolution. The PSII complex binds additional chlorophylls, carotenoids and specific lipids. is required as a cofactor.

It localises to the plastid. It is found in the chloroplast thylakoid membrane. The enzyme catalyses 2 a plastoquinone + 4 hnu + 2 H2O = 2 a plastoquinol + O2. In terms of biological role, photosystem II (PSII) is a light-driven water:plastoquinone oxidoreductase that uses light energy to abstract electrons from H(2)O, generating O(2) and a proton gradient subsequently used for ATP formation. It consists of a core antenna complex that captures photons, and an electron transfer chain that converts photonic excitation into a charge separation. The D1/D2 (PsbA/PsbD) reaction center heterodimer binds P680, the primary electron donor of PSII as well as several subsequent electron acceptors. D2 is needed for assembly of a stable PSII complex. The polypeptide is Photosystem II D2 protein (Galdieria sulphuraria (Red alga)).